The primary structure comprises 691 residues: Elongation factor G (691 aa).

The tr-type G domain occupies 8–283 (EDYRNIGIMA…AVVDFLPSPL (276 aa)). GTP is bound by residues 17-24 (AHIDAGKT), 81-85 (DTPGH), and 135-138 (NKMD).

It belongs to the TRAFAC class translation factor GTPase superfamily. Classic translation factor GTPase family. EF-G/EF-2 subfamily.

Its subcellular location is the cytoplasm. Catalyzes the GTP-dependent ribosomal translocation step during translation elongation. During this step, the ribosome changes from the pre-translocational (PRE) to the post-translocational (POST) state as the newly formed A-site-bound peptidyl-tRNA and P-site-bound deacylated tRNA move to the P and E sites, respectively. Catalyzes the coordinated movement of the two tRNA molecules, the mRNA and conformational changes in the ribosome. In Parvibaculum lavamentivorans (strain DS-1 / DSM 13023 / NCIMB 13966), this protein is Elongation factor G.